The following is an 814-amino-acid chain: Outer membrane usher protein SefC (814 aa).

A signal peptide spans 1-30 (MKKTTITLFVLTSVFHSGNVFSRQYNFDYG). Cysteines 792 and 813 form a disulfide.

It belongs to the fimbrial export usher family.

It localises to the cell outer membrane. Involved in the export and assembly of the SefA fimbrial subunit. This Salmonella enteritidis protein is Outer membrane usher protein SefC (sefC).